A 479-amino-acid chain; its full sequence is Probable cytosol aminopeptidase (479 aa).

Mn(2+) contacts are provided by Lys-247 and Asp-252. Lys-259 is an active-site residue. 3 residues coordinate Mn(2+): Asp-270, Asp-329, and Glu-331. Arg-333 is an active-site residue.

This sequence belongs to the peptidase M17 family. Mn(2+) serves as cofactor.

The protein localises to the cytoplasm. It carries out the reaction Release of an N-terminal amino acid, Xaa-|-Yaa-, in which Xaa is preferably Leu, but may be other amino acids including Pro although not Arg or Lys, and Yaa may be Pro. Amino acid amides and methyl esters are also readily hydrolyzed, but rates on arylamides are exceedingly low.. It catalyses the reaction Release of an N-terminal amino acid, preferentially leucine, but not glutamic or aspartic acids.. Its function is as follows. Presumably involved in the processing and regular turnover of intracellular proteins. Catalyzes the removal of unsubstituted N-terminal amino acids from various peptides. This chain is Probable cytosol aminopeptidase, found in Vesicomyosocius okutanii subsp. Calyptogena okutanii (strain HA).